The following is a 178-amino-acid chain: Ribosome maturation factor RimP (178 aa).

The protein belongs to the RimP family.

It is found in the cytoplasm. Required for maturation of 30S ribosomal subunits. This is Ribosome maturation factor RimP from Mycobacterium avium (strain 104).